The chain runs to 120 residues: Aspartate 1-decarboxylase (120 aa).

The active-site Schiff-base intermediate with substrate; via pyruvic acid is the S25. At S25 the chain carries Pyruvic acid (Ser). Position 57 (T57) interacts with substrate. The active-site Proton donor is Y58. 73–75 (GAA) is a binding site for substrate.

It belongs to the PanD family. As to quaternary structure, heterooctamer of four alpha and four beta subunits. Requires pyruvate as cofactor. Post-translationally, is synthesized initially as an inactive proenzyme, which is activated by self-cleavage at a specific serine bond to produce a beta-subunit with a hydroxyl group at its C-terminus and an alpha-subunit with a pyruvoyl group at its N-terminus.

Its subcellular location is the cytoplasm. The catalysed reaction is L-aspartate + H(+) = beta-alanine + CO2. The protein operates within cofactor biosynthesis; (R)-pantothenate biosynthesis; beta-alanine from L-aspartate: step 1/1. In terms of biological role, catalyzes the pyruvoyl-dependent decarboxylation of aspartate to produce beta-alanine. This is Aspartate 1-decarboxylase from Deinococcus deserti (strain DSM 17065 / CIP 109153 / LMG 22923 / VCD115).